We begin with the raw amino-acid sequence, 306 residues long: MELKDYYAIMGVKPTDDLKTIKTAYRRLARKYHPDVSKEPDAEARFKEVAEAWEVLSDEQRRAEYDQMWQHRNDPQFSRQFQHGDGQSFNAEDFDDIFSSIFGQHARQSRQRPATRGHDIEIEVAVFLEETLTEHKRTISYNLPVYNAFGMIEQEIPKTLNVKIPAGVGNGQRIRLKGQGTPGENGGPNGDLWLVIHIAPHPLFDIVGQDLEIVVPVSPWEAALGAKVTVPTLKESILLTIPPGSQAGQRLRVKGKGLVSKKQTGDLYAVLKIVMPPKPDENTAALWQQLADAQSSFEPRKDWGKA.

Residues 5–69 (DYYAIMGVKP…QRRAEYDQMW (65 aa)) form the J domain.

The protein localises to the cytoplasm. It localises to the nucleoid. Its function is as follows. DNA-binding protein that preferentially recognizes a curved DNA sequence. It is probably a functional analog of DnaJ; displays overlapping activities with DnaJ, but functions under different conditions, probably acting as a molecular chaperone in an adaptive response to environmental stresses other than heat shock. Lacks autonomous chaperone activity; binds native substrates and targets them for recognition by DnaK. Its activity is inhibited by the binding of CbpM. This is Curved DNA-binding protein from Escherichia coli O7:K1 (strain IAI39 / ExPEC).